The chain runs to 274 residues: Diaminopimelate epimerase (274 aa).

Substrate-binding residues include Asn11, Gln44, and Asn64. Cys73 acts as the Proton donor in catalysis. Substrate is bound by residues 74-75 (GN), Asn157, Asn190, and 208-209 (ER). The Proton acceptor role is filled by Cys217. 218 to 219 (GS) serves as a coordination point for substrate.

This sequence belongs to the diaminopimelate epimerase family. As to quaternary structure, homodimer.

Its subcellular location is the cytoplasm. The enzyme catalyses (2S,6S)-2,6-diaminopimelate = meso-2,6-diaminopimelate. The protein operates within amino-acid biosynthesis; L-lysine biosynthesis via DAP pathway; DL-2,6-diaminopimelate from LL-2,6-diaminopimelate: step 1/1. Catalyzes the stereoinversion of LL-2,6-diaminopimelate (L,L-DAP) to meso-diaminopimelate (meso-DAP), a precursor of L-lysine and an essential component of the bacterial peptidoglycan. This chain is Diaminopimelate epimerase, found in Yersinia enterocolitica serotype O:8 / biotype 1B (strain NCTC 13174 / 8081).